The primary structure comprises 151 residues: S-protein homolog 74 (151 aa).

The signal sequence occupies residues 1–25; that stretch reads MNYIKQFILAICFYLVLTCQDHVLA.

Belongs to the plant self-incompatibility (S1) protein family.

It is found in the secreted. This Arabidopsis thaliana (Mouse-ear cress) protein is S-protein homolog 74.